We begin with the raw amino-acid sequence, 1227 residues long: MIDVNEFEYMKIGLASPDKIRSWSYGEVKKPETINYRTLKPEKDGLFCERIFGPTKDWECHCGKYKRVRYKGVVCDRCGVEVTRAKVRRERMGHIELAAPVSHIWYFKGIPSRMGLILDMSPRALEEVIYFASYVVIDAGATNLESKQLLSEKEYRAYREKFGNTFEASMGAEAIKKLLGKIDLEDETHSLKEELKSAQGQRRTRAIKRLEVVESFRNSGNSPEWMILDVLPVIPPELRPMVQLDGGRFATSDLNDLYRRVINRNNRLKRLLDLGAPSIIVQNEKRMLQEAVDALIDNGRRGRPVTGPGNRPLKSLSHMLKGKQGRFRQNLLGKRVDYSGRSVIVVGPNLKMYQCGLPKEMAIELFKPFVMKELVERGLAHNIKSAKRKIERLNNDVWDVLEDVIREHPVLLNRAPTLHRLGIQAFEPTLVEGRAIRLHPLVCTAYNADFDGDQMAVHVPLSAEAQAEARLLMLAAQNILNPKDGKPVVTPSQDMVLGNYYLTLERESARGEGTIFYGPNEVLIAYDTGHVHLHTRIAIKAGSLNNPTFTEEQNNMFLLTTVGKVIFNEILPESFPYINEPTDFNLEQVTPEKYFVNLTIDEETLKELESDSAYNSLDEKGKIDAQRTAVLRKHFESVPVVNPFRKKFLGNIIAEVFKRFHITETSKMLDRMKNLGFKYSTRAGITVGVSDIVVLPDKGEILAVAQEKVDKVQAQFRRGFITEDERYDRVISSWSAAKDEIQAKLMKSLEKTNPIFMMSDSGARGNASNFTQLAGMRGLMANPAGRIIELPIKSSFREGLTVLEYFISTHGARKGLADTALKTADSGYLTRRLVDVAQDVIVREDDCGTDRGLTIGALMEGTELIEALDERIVGRHTKKTIVHPETGEVILNKDGLIDQDVARAIIEAGIEEVTIRSAFTCNTKHGVCKKCYGMNLATGEKVEVGEAVGIIAAQSIGEPGTQLTMRTFHTGGVAGDDITQGLPRIQEIFEARNPKGQSVISEIAGTVSDITEIREGLKEITIQGDVETRKYQAPYNARLKVIEGDNVERGQVLTEGSIDPKQLLKVKDVSTVQEYLLKEVQKVYRMQGVEIGDKHIEVMVRQMLRKVRVIEAGDTDLLPGSLLDIHQFAEANADAVMDGKNPATCRPVILGITKASLETESFLSAASFQETTRVLTDAAIKGKRDELLGLKENVIIGKLVPAGTGMQRYRQIRIEKDELDTEVVSAE.

4 residues coordinate Zn(2+): cysteine 60, cysteine 62, cysteine 75, and cysteine 78. Aspartate 449, aspartate 451, and aspartate 453 together coordinate Mg(2+). Zn(2+) is bound by residues cysteine 847, cysteine 921, cysteine 928, and cysteine 931.

It belongs to the RNA polymerase beta' chain family. In terms of assembly, the RNAP catalytic core consists of 2 alpha, 1 beta, 1 beta' and 1 omega subunit. When a sigma factor is associated with the core the holoenzyme is formed, which can initiate transcription. The cofactor is Mg(2+). It depends on Zn(2+) as a cofactor.

It catalyses the reaction RNA(n) + a ribonucleoside 5'-triphosphate = RNA(n+1) + diphosphate. DNA-dependent RNA polymerase catalyzes the transcription of DNA into RNA using the four ribonucleoside triphosphates as substrates. The protein is DNA-directed RNA polymerase subunit beta' of Lysinibacillus sphaericus (strain C3-41).